A 465-amino-acid polypeptide reads, in one-letter code: 23S rRNA (uracil(1939)-C(5))-methyltransferase RlmD (465 aa).

The disordered stretch occupies residues 1–20 (MSEAVPLSTPGASHAGAATD). The TRAM domain occupies 12 to 80 (ASHAGAATDR…PTYEQAQVVD (69 aa)). [4Fe-4S] cluster-binding residues include cysteine 93, cysteine 99, cysteine 102, and cysteine 181. S-adenosyl-L-methionine-binding residues include glutamine 289, phenylalanine 318, asparagine 323, glutamate 339, asparagine 367, and aspartate 388. The active-site Nucleophile is the cysteine 421.

Belongs to the class I-like SAM-binding methyltransferase superfamily. RNA M5U methyltransferase family. RlmD subfamily.

It carries out the reaction uridine(1939) in 23S rRNA + S-adenosyl-L-methionine = 5-methyluridine(1939) in 23S rRNA + S-adenosyl-L-homocysteine + H(+). Functionally, catalyzes the formation of 5-methyl-uridine at position 1939 (m5U1939) in 23S rRNA. In Burkholderia thailandensis (strain ATCC 700388 / DSM 13276 / CCUG 48851 / CIP 106301 / E264), this protein is 23S rRNA (uracil(1939)-C(5))-methyltransferase RlmD.